The sequence spans 208 residues: ATP-dependent Clp protease proteolytic subunit (208 aa).

Residue Ser107 is the Nucleophile of the active site. His132 is a catalytic residue.

The protein belongs to the peptidase S14 family. As to quaternary structure, fourteen ClpP subunits assemble into 2 heptameric rings which stack back to back to give a disk-like structure with a central cavity, resembling the structure of eukaryotic proteasomes.

Its subcellular location is the cytoplasm. It carries out the reaction Hydrolysis of proteins to small peptides in the presence of ATP and magnesium. alpha-casein is the usual test substrate. In the absence of ATP, only oligopeptides shorter than five residues are hydrolyzed (such as succinyl-Leu-Tyr-|-NHMec, and Leu-Tyr-Leu-|-Tyr-Trp, in which cleavage of the -Tyr-|-Leu- and -Tyr-|-Trp bonds also occurs).. Functionally, cleaves peptides in various proteins in a process that requires ATP hydrolysis. Has a chymotrypsin-like activity. Plays a major role in the degradation of misfolded proteins. The chain is ATP-dependent Clp protease proteolytic subunit from Jannaschia sp. (strain CCS1).